Consider the following 311-residue polypeptide: Probable manganese-dependent inorganic pyrophosphatase (311 aa).

Residues H9, D13, D15, D77, H99, and D151 each coordinate Mn(2+).

It belongs to the PPase class C family. It depends on Mn(2+) as a cofactor.

It is found in the cytoplasm. The enzyme catalyses diphosphate + H2O = 2 phosphate + H(+). This chain is Probable manganese-dependent inorganic pyrophosphatase, found in Streptococcus equi subsp. zooepidemicus (strain H70).